The following is a 282-amino-acid chain: Phosphatidylglycerol--prolipoprotein diacylglyceryl transferase (282 aa).

A run of 4 helical transmembrane segments spans residues 23–43 (IGPL…LLGW), 71–91 (FIVW…IFFY), 106–126 (IWNG…AMII), and 132–152 (GIPI…GLFF). Arg-154 is an a 1,2-diacyl-sn-glycero-3-phospho-(1'-sn-glycerol) binding site. Transmembrane regions (helical) follow at residues 189-209 (LYEA…LVYG), 217-237 (GFIT…VEFF), and 252-272 (WLTM…WAML).

It belongs to the Lgt family.

The protein resides in the cell inner membrane. The enzyme catalyses L-cysteinyl-[prolipoprotein] + a 1,2-diacyl-sn-glycero-3-phospho-(1'-sn-glycerol) = an S-1,2-diacyl-sn-glyceryl-L-cysteinyl-[prolipoprotein] + sn-glycerol 1-phosphate + H(+). It functions in the pathway protein modification; lipoprotein biosynthesis (diacylglyceryl transfer). In terms of biological role, catalyzes the transfer of the diacylglyceryl group from phosphatidylglycerol to the sulfhydryl group of the N-terminal cysteine of a prolipoprotein, the first step in the formation of mature lipoproteins. This Rhizobium leguminosarum bv. trifolii (strain WSM2304) protein is Phosphatidylglycerol--prolipoprotein diacylglyceryl transferase.